The following is a 483-amino-acid chain: Probable ATP-dependent RNA helicase DDX6 (483 aa).

2 disordered regions span residues 1–39 and 55–75; these read MSTA…TQTQ and TQQQ…WKKT. Residues 55–66 show a composition bias toward polar residues; sequence TQQQAQSMTTTI. The Q motif signature appears at 96 to 124; that stretch reads NEFEDYCLKRELLMGIFEMGWEKPSPIQE. The Helicase ATP-binding domain maps to 127–298; sequence IPIALSGRDI…NSHLQKPYEI (172 aa). 140–147 lines the ATP pocket; it reads AKNGTGKS. A DEAD box motif is present at residues 246 to 249; that stretch reads DEAD. Residues 308–468 enclose the Helicase C-terminal domain; that stretch reads GVTQYYAYVT…PIPSNIDKSL (161 aa).

It belongs to the DEAD box helicase family. DDX6/DHH1 subfamily.

Its subcellular location is the cytoplasm. The protein localises to the P-body. It is found in the nucleus. The enzyme catalyses ATP + H2O = ADP + phosphate + H(+). In terms of biological role, essential for the formation of P-bodies, cytosolic membrane-less ribonucleoprotein granules involved in RNA metabolism through the coordinated storage of mRNAs encoding regulatory functions. Plays a role in P-bodies to coordinate the storage of translationally inactive mRNAs in the cytoplasm and prevent their degradation. This Gallus gallus (Chicken) protein is Probable ATP-dependent RNA helicase DDX6 (DDX6).